An 861-amino-acid chain; its full sequence is Leucine--tRNA ligase (861 aa).

Residues 42–52 carry the 'HIGH' region motif; the sequence is PYPSGRLHMGH. Positions 619–623 match the 'KMSKS' region motif; that stretch reads KMSKS. Lys622 is a binding site for ATP.

Belongs to the class-I aminoacyl-tRNA synthetase family.

The protein resides in the cytoplasm. It catalyses the reaction tRNA(Leu) + L-leucine + ATP = L-leucyl-tRNA(Leu) + AMP + diphosphate. This chain is Leucine--tRNA ligase, found in Haemophilus influenzae (strain PittEE).